We begin with the raw amino-acid sequence, 675 residues long: PML-RARA-regulated adapter molecule 1 (675 aa).

Residues 1-19 (MGSNQDFRNLQAKFQTSQP) show a composition bias toward polar residues. Disordered stretches follow at residues 1–473 (MGSN…GPIN) and 523–562 (TDDS…PQQL). Basic and acidic residues predominate over residues 23–35 (ELFRKTPKPELNK). Over residues 43–58 (TELSEQPKKSSQSELS) the composition is skewed to polar residues. Positions 141 to 150 (PKPEFGELSK) are enriched in basic and acidic residues. Polar residues-rich tracts occupy residues 224–242 (RKSQ…SPSK), 251–264 (HSPQ…PKNN), and 322–331 (LQPSDLTRAS). Phosphoserine is present on Ser-374. The span at 407-422 (SECSLPSASAGSSPQC) shows a compositional bias: polar residues. Positions 462 to 471 (PAKPALPPGP) are enriched in pro residues. The segment covering 537 to 546 (LSTQQATRWP) has biased composition (polar residues). The 79-residue stretch at 578–656 (KAEREFRKKF…PRTALLPLET (79 aa)) folds into the SH3 domain.

As to quaternary structure, interacts with SKAP2, LCP2 and DBNL. May interact with LYN. Interacts with NEK6. Post-translationally, may be phosphorylated on tyrosines. Expressed in bone marrow and mature neutrophils. Weakly expressed in macrophages and mast cells.

Its function is as follows. May be involved in integrin signaling in neutrophils. Binds to PtdIns(4)P. The protein is PML-RARA-regulated adapter molecule 1 (Pram1) of Mus musculus (Mouse).